The following is a 108-amino-acid chain: Ig kappa chain V-V region HP 123E6 (108 aa).

The tract at residues 1–23 (DIQMTQSTSSLSASLGDRVTISC) is framework-1. C23 and C88 are joined by a disulfide. The interval 24-34 (RASQDISNYLN) is complementarity-determining-1. Residues 35-49 (WYQQKPDGTVKLLIY) are framework-2. Residues 50-56 (YTSRLHS) are complementarity-determining-2. The interval 57–88 (GVPSRFSGSGSGTDYSLTISNLEQEDIATYFC) is framework-3. The interval 89–97 (QQGYMLPRT) is complementarity-determining-3. Residues 98–108 (FGGGTKLEIKR) are framework-4.

In Mus musculus (Mouse), this protein is Ig kappa chain V-V region HP 123E6.